The sequence spans 156 residues: Small ribosomal subunit protein uS7 (156 aa).

This sequence belongs to the universal ribosomal protein uS7 family. Part of the 30S ribosomal subunit. Contacts proteins S9 and S11.

Functionally, one of the primary rRNA binding proteins, it binds directly to 16S rRNA where it nucleates assembly of the head domain of the 30S subunit. Is located at the subunit interface close to the decoding center, probably blocks exit of the E-site tRNA. In Sorangium cellulosum (strain So ce56) (Polyangium cellulosum (strain So ce56)), this protein is Small ribosomal subunit protein uS7.